Here is a 1360-residue protein sequence, read N- to C-terminus: Activating molecule in BECN1-regulated autophagy protein 1B (1360 aa).

WD repeat units follow at residues aspartate 50 to serine 89, glycine 92 to phenylalanine 132, and glutamate 134 to lysine 174. A compositionally biased stretch (polar residues) spans arginine 249–glutamine 258. Disordered stretches follow at residues arginine 249–proline 277, proline 315–histidine 364, glycine 412–asparagine 490, glutamate 514–serine 573, tryptophan 587–glycine 616, proline 664–glutamate 688, and threonine 754–asparagine 796. The segment covering glutamine 319 to serine 333 has biased composition (low complexity). The span at alanine 350–asparagine 361 shows a compositional bias: polar residues. A compositionally biased stretch (low complexity) spans serine 428–leucine 437. 2 stretches are compositionally biased toward polar residues: residues glycine 443–threonine 454 and aspartate 473–asparagine 490. Residues serine 590–leucine 607 show a composition bias toward low complexity. The span at threonine 754 to serine 768 shows a compositional bias: polar residues. Residues serine 775 to glutamate 784 are compositionally biased toward acidic residues. Short sequence motifs (TQT motif) lie at residues threonine 1109–threonine 1111 and threonine 1121–threonine 1123. Disordered stretches follow at residues glutamate 1120–histidine 1142 and serine 1241–arginine 1360. 2 stretches are compositionally biased toward polar residues: residues serine 1129–histidine 1142 and serine 1241–asparagine 1252. Residues alanine 1278–proline 1288 are compositionally biased toward low complexity. The segment covering phenylalanine 1311–arginine 1321 has biased composition (basic and acidic residues). Over residues asparagine 1329 to glutamate 1347 the composition is skewed to low complexity. Residues serine 1348 to arginine 1360 are compositionally biased toward basic and acidic residues.

The protein belongs to the WD repeat AMBRA1 family. In terms of assembly, component of the DCX(AMBRA1) E3 ubiquitin ligase complex.

The protein resides in the endoplasmic reticulum. It localises to the cytoplasm. Its subcellular location is the cytoskeleton. It is found in the cytoplasmic vesicle. The protein localises to the autophagosome. The protein resides in the mitochondrion. It localises to the cytosol. Its subcellular location is the nucleus. It is found in the cell junction. The protein localises to the focal adhesion. The protein operates within protein modification; protein ubiquitination. Its function is as follows. Substrate-recognition component of a DCX (DDB1-CUL4-X-box) E3 ubiquitin-protein ligase complex involved in cell cycle control and autophagy. The DCX(AMBRA1) complex specifically mediates the polyubiquitination of target proteins. Acts as an upstream master regulator of the transition from G1 to S cell phase: ambra1b specifically recognizes and binds phosphorylated cyclin-D (ccnd1, ccnd2 and ccnd3), leading to cyclin-D ubiquitination by the DCX(AMBRA1) complex and subsequent degradation. Acts as a regulator of Cul5-RING (CRL5) E3 ubiquitin-protein ligase complexes by mediating ubiquitination and degradation of Elongin-C (eloc) component of CRL5 complexes. Acts as a key regulator of autophagy by modulating the BECN1-PIK3C3 complex: controls protein turnover during neuronal development, and regulates normal cell survival and proliferation. In normal conditions, ambra1b is tethered to the cytoskeleton via interaction with dyneins light chains. Upon autophagy induction, ambra1b is released from the cytoskeletal docking site to induce autophagosome nucleation by mediating ubiquitination of proteins involved in autophagy. Also acts as an activator of mitophagy. Required for skeletal muscle development. The polypeptide is Activating molecule in BECN1-regulated autophagy protein 1B (Danio rerio (Zebrafish)).